Reading from the N-terminus, the 207-residue chain is Nodulation protein S (207 aa).

The protein belongs to the NodS family.

SAM-utilizing methyltransferase involved in nod factor synthesis. In Azorhizobium caulinodans (strain ATCC 43989 / DSM 5975 / JCM 20966 / LMG 6465 / NBRC 14845 / NCIMB 13405 / ORS 571), this protein is Nodulation protein S (nodS).